Consider the following 223-residue polypeptide: Cytidylate kinase (223 aa).

Residue 10-18 (GPASSGKST) participates in ATP binding.

Belongs to the cytidylate kinase family. Type 1 subfamily.

It is found in the cytoplasm. It carries out the reaction CMP + ATP = CDP + ADP. The catalysed reaction is dCMP + ATP = dCDP + ADP. This is Cytidylate kinase from Streptococcus pneumoniae serotype 4 (strain ATCC BAA-334 / TIGR4).